The sequence spans 68 residues: Large ribosomal subunit protein bL33c (68 aa).

Belongs to the bacterial ribosomal protein bL33 family.

It is found in the plastid. Its subcellular location is the chloroplast. The chain is Large ribosomal subunit protein bL33c from Lactuca sativa (Garden lettuce).